Reading from the N-terminus, the 272-residue chain is HMP-PP phosphatase (272 aa).

Residue Asp8 is the Nucleophile of the active site. Residues Asp8, Asp10, and Asp212 each contribute to the Mg(2+) site.

It belongs to the HAD-like hydrolase superfamily. Cof family. Requires Mg(2+) as cofactor.

The catalysed reaction is 4-amino-2-methyl-5-(diphosphooxymethyl)pyrimidine + H2O = 4-amino-2-methyl-5-(phosphooxymethyl)pyrimidine + phosphate + H(+). In terms of biological role, catalyzes the hydrolysis of 4-amino-2-methyl-5-hydroxymethylpyrimidine pyrophosphate (HMP-PP) to 4-amino-2-methyl-5-hydroxymethylpyrimidine phosphate (HMP-P). The polypeptide is HMP-PP phosphatase (Salmonella typhi).